A 577-amino-acid chain; its full sequence is Outer spore wall assembly protein SHE10 (577 aa).

Positions 1–23 (MGKLIKLITTLTVLVSLLQYCCE) are cleaved as a signal peptide. Coiled coils occupy residues 379–416 (NETR…ENVE) and 513–561 (ILRS…EEDV). Over residues 525–545 (RERKERERKEREKAAAEEFQR) the composition is skewed to basic and acidic residues. Residues 525–577 (RERKERERKEREKAAAEEFQRQQELLLQQEEEDEEDVSYTSTSTITTTTTMTL) form a disordered region. Residues 562–577 (SYTSTSTITTTTTMTL) show a composition bias toward low complexity.

The protein belongs to the SHE10 family. As to quaternary structure, component of the mitochondria-localized RNase mitochondrial RNA-processing (RNase MRP) composed of one single RNA encoded by the NME1 gene and at least 31 proteins. Absent in the nucleus-localized RNase MRP (NuMRP).

The protein resides in the mitochondrion. In terms of biological role, involved in spore wall assembly. May be a component of the mitochondrial RNase MRP (MtMRP), a ribonucleoprotein endoribonuclease involved in the cleaving RNA transcripts to generate primers for DNA replication in mitochondria. This chain is Outer spore wall assembly protein SHE10, found in Saccharomyces cerevisiae (strain RM11-1a) (Baker's yeast).